The chain runs to 508 residues: Maturase K (508 aa).

The protein belongs to the intron maturase 2 family. MatK subfamily.

The protein resides in the plastid. Its subcellular location is the chloroplast. Functionally, usually encoded in the trnK tRNA gene intron. Probably assists in splicing its own and other chloroplast group II introns. The polypeptide is Maturase K (Verbena rigida (Tuberous vervain)).